The following is a 371-amino-acid chain: Anhydro-N-acetylmuramic acid kinase (371 aa).

15 to 22 (GTSLDGVD) contacts ATP.

This sequence belongs to the anhydro-N-acetylmuramic acid kinase family.

It catalyses the reaction 1,6-anhydro-N-acetyl-beta-muramate + ATP + H2O = N-acetyl-D-muramate 6-phosphate + ADP + H(+). Its pathway is amino-sugar metabolism; 1,6-anhydro-N-acetylmuramate degradation. It participates in cell wall biogenesis; peptidoglycan recycling. Functionally, catalyzes the specific phosphorylation of 1,6-anhydro-N-acetylmuramic acid (anhMurNAc) with the simultaneous cleavage of the 1,6-anhydro ring, generating MurNAc-6-P. Is required for the utilization of anhMurNAc either imported from the medium or derived from its own cell wall murein, and thus plays a role in cell wall recycling. This Cereibacter sphaeroides (strain ATCC 17023 / DSM 158 / JCM 6121 / CCUG 31486 / LMG 2827 / NBRC 12203 / NCIMB 8253 / ATH 2.4.1.) (Rhodobacter sphaeroides) protein is Anhydro-N-acetylmuramic acid kinase.